Reading from the N-terminus, the 215-residue chain is MKALLLGAPGAGKGTQAQFITAAFGIPQISTGDMLRAAIKAGTPLGLEAKKIIDEGGLVRDDIIIGMVKERIAQDDCKNGFLFDGFPRTLAQAEAMVEAGVGLDAVVEIDVSDSVIVDRMSGRRVHLASGRTYHVTYNPPKTEGKDDVTGEDLIQRDDDKEETVKKRLAVYHEQTEVLVDFYSKLEGEHAPKYIKVDGTQAVEAVKAEVLGALGK.

Position 10-15 (10-15) interacts with ATP; it reads GAGKGT. Positions 30-59 are NMP; that stretch reads STGDMLRAAIKAGTPLGLEAKKIIDEGGLV. AMP-binding positions include Thr31, Arg36, 57 to 59, 85 to 88, and Gln92; these read GLV and GFPR. The tract at residues 122-159 is LID; sequence GRRVHLASGRTYHVTYNPPKTEGKDDVTGEDLIQRDDD. ATP-binding positions include Arg123 and 132–133; that span reads TY. Arg156 and Arg167 together coordinate AMP. Position 200 (Gln200) interacts with ATP.

This sequence belongs to the adenylate kinase family. Monomer.

Its subcellular location is the cytoplasm. The catalysed reaction is AMP + ATP = 2 ADP. It participates in purine metabolism; AMP biosynthesis via salvage pathway; AMP from ADP: step 1/1. Its function is as follows. Catalyzes the reversible transfer of the terminal phosphate group between ATP and AMP. Plays an important role in cellular energy homeostasis and in adenine nucleotide metabolism. The polypeptide is Adenylate kinase (Neisseria gonorrhoeae (strain ATCC 700825 / FA 1090)).